The chain runs to 899 residues: Inositol 1,4,5-triphosphate receptor associated 1 (899 aa).

Disordered stretches follow at residues 32–110, 164–286, 324–391, and 463–486; these read PGTH…HRHL, RRGR…PLQH, KTAR…EEPG, and AAEQDKGVSPELAPAAEEEESKSG. Residues 100–110 show a composition bias toward basic residues; that stretch reads SPHRRLSHRHL. Ser106 carries the phosphoserine modification. Residues 140–172 are interaction with PRKG1; the sequence is SEEDKKKNLALLEEAKLVSERFLTRRGRKSRSS. Residues 171–180 show a composition bias toward polar residues; it reads SSLGDSPSAV. Residues 181-203 are compositionally biased toward low complexity; the sequence is SPNLSSGASPASSRSCSLTISTS. Over residues 266 to 281 the composition is skewed to basic and acidic residues; it reads TVEKTKELTVEQKENF. Polar residues predominate over residues 333–351; sequence PRTTAQGSGGTVSPHSLGQ. Phosphoserine is present on Ser382. The interaction with ITPR1 stretch occupies residues 521-567; it reads NVFVQLSLAFRNDSYTLESRINQAERERNLTEENTEKELENFKASIT. Residues 534-632 are a coiled coil; sequence SYTLESRINQ…MQYVENLKRT (99 aa). Phosphoserine is present on residues Ser670 and Ser683. Disordered stretches follow at residues 695–722 and 757–818; these read LPGQAPSSSPMPSLPALSESSNGKSSIS and TSQE…DQGS. Over residues 699-715 the composition is skewed to low complexity; that stretch reads APSSSPMPSLPALSESS. 2 stretches are compositionally biased toward basic and acidic residues: residues 759–770 and 777–787; these read QETKAKAEEEAY and GVKKTEELQDL. Over residues 788-814 the composition is skewed to acidic residues; sequence KEEEEEEQKTESPEEPEEVEETQEDEK. Residues 839-859 traverse the membrane as a helical segment; the sequence is WQVIWMMAAVMLVLSVVLGLY. Positions 867 to 899 are disordered; sequence EEADGPPGRSTCSAAQRDSWWSSGLQQELPAEQ. Polar residues predominate over residues 876-892; the sequence is STCSAAQRDSWWSSGLQ.

Part of cGMP kinase signaling complex at least composed of ACTA2/alpha-actin, CNN1/calponin H1, PLN/phospholamban, PRKG1 and ITPR1. Interacts with PRKG1/cGKI-beta and ITPR1/IP3R type I. Interacts with HCN4; regulates HCN4 channel activity. Phosphorylated by PRKG1/cGKI. As to expression, highly expressed in smooth muscle such as aorta, colon and uterus. Detected in the brain, in the thalamus, in the hippocampus and myenteric plexus. Highly expressed in megakaryocytes. Down-regulated during macrophage differentiation.

The protein resides in the membrane. It localises to the cytoplasm. Its subcellular location is the perinuclear region. The protein localises to the sarcoplasmic reticulum. In terms of biological role, plays a role as NO/PRKG1-dependent regulator of IP3-induced calcium release; its phosphorylation by PRKG1 inhibits bradykinin and IP3-induced calcium release from intracellular stores. Recruits PRKG1 to the endoplasmic reticulum and may mediate the assembly of PRKG1 and ITPR1 in a macrocomplex. Involved in PRKG1 signaling cascade leading to inhibition of platelet activation and aggregation. Also mediates NO-dependent inhibition of calcium signaling in gastrointestinal smooth muscle contributing to NO-dependent relaxation. Plays a role in the regulation of cellular excitability by regulating the hyperpolarization-activated cyclic nucleotide-gated HCN4 channel activity. The polypeptide is Inositol 1,4,5-triphosphate receptor associated 1 (Irag1) (Mus musculus (Mouse)).